Reading from the N-terminus, the 248-residue chain is Ribonuclease 3 (248 aa).

Residues 6-136 (LAYLQTLIGS…LIGAIYLDKG (131 aa)) enclose the RNase III domain. Glu49 is a Mg(2+) binding site. Asp53 is a catalytic residue. Residues Asp122 and Glu125 each contribute to the Mg(2+) site. Glu125 is a catalytic residue. The region spanning 163–231 (NYKSCLIEYS…AKEAMERIIA (69 aa)) is the DRBM domain.

This sequence belongs to the ribonuclease III family. Homodimer. Mg(2+) is required as a cofactor.

The protein resides in the cytoplasm. The catalysed reaction is Endonucleolytic cleavage to 5'-phosphomonoester.. Its function is as follows. Digests double-stranded RNA. Involved in the processing of primary rRNA transcript to yield the immediate precursors to the large and small rRNAs (23S and 16S). Processes some mRNAs, and tRNAs when they are encoded in the rRNA operon. Processes pre-crRNA and tracrRNA of type II CRISPR loci if present in the organism. The sequence is that of Ribonuclease 3 from Chlorobium chlorochromatii (strain CaD3).